A 326-amino-acid polypeptide reads, in one-letter code: L-lactate dehydrogenase (326 aa).

NAD(+)-binding positions include valine 20, aspartate 41, lysine 46, tyrosine 71, and 85–86 (GA). Substrate-binding residues include glutamine 88 and arginine 94. NAD(+) is bound by residues serine 107, 124-126 (AAN), and serine 149. Substrate is bound at residue 126–129 (NPVD). A substrate-binding site is contributed by 154–157 (DTAR). Residues arginine 159, 171-174 (RSVH), and histidine 174 each bind beta-D-fructose 1,6-bisphosphate. The active-site Proton acceptor is the histidine 181. Residue tyrosine 226 is modified to Phosphotyrosine. Threonine 235 lines the substrate pocket.

This sequence belongs to the LDH/MDH superfamily. LDH family. In terms of assembly, homotetramer.

Its subcellular location is the cytoplasm. It catalyses the reaction (S)-lactate + NAD(+) = pyruvate + NADH + H(+). The protein operates within fermentation; pyruvate fermentation to lactate; (S)-lactate from pyruvate: step 1/1. With respect to regulation, allosterically activated by fructose 1,6-bisphosphate (FBP) alone under acidic conditions, while it requires additional activation factors such as divalent cations (Mn(2+)) under neutral conditions. Under acidic conditions, Mn(2+) is an inhibitor in the absence of fructose 1,6-bisphosphate (FBP). In case of L.casei, L-LDH binds four fructose 1,6-bisphosphate (FBP) molecules per tetramer, while usual allosteric L-LDH binds only two fructose 1,6-bisphosphate (FBP) molecules per tetramer. Functionally, catalyzes the conversion of lactate to pyruvate. This chain is L-lactate dehydrogenase, found in Lacticaseibacillus casei (Lactobacillus casei).